The primary structure comprises 441 residues: Coiled-coil domain-containing protein 91 (441 aa).

Residues 1 to 16 form a GGA1-binding motif region; sequence MDDDDFGGFEAAETFD. The disordered stretch occupies residues 1 to 26; the sequence is MDDDDFGGFEAAETFDGGSGETQTTS. S43 and S46 each carry phosphoserine. Coiled-coil stretches lie at residues 130 to 209 and 249 to 407; these read SNIQ…GHEA and ELLN…KRLD. Residues 210-413 are homodimerization; it reads LSIIVDEYKA…KRLDQVIRQR (204 aa).

In terms of assembly, homodimer. Interacts with GGA1, GGA2 and AP1G1. In terms of tissue distribution, widely expressed.

The protein resides in the membrane. It is found in the golgi apparatus. It localises to the trans-Golgi network membrane. The protein localises to the trans-Golgi network. In terms of biological role, involved in the regulation of membrane traffic through the trans-Golgi network (TGN). Functions in close cooperation with the GGAs in the sorting of hydrolases to lysosomes. The sequence is that of Coiled-coil domain-containing protein 91 (CCDC91) from Homo sapiens (Human).